Consider the following 118-residue polypeptide: MRGRTRIGKFTTCGERNPKKVARTQPTKKDLKTQNPILHSDQGWLYQMVGYQAILRENSIQQNMSRKGNYLDNNAMENFFGRLKTECYYDKRFETFKQLKKQLMSIFIITTMITFRGN.

This sequence belongs to the transposase IS3/IS150/IS904 family.

This is an uncharacterized protein from Haemophilus influenzae (strain ATCC 51907 / DSM 11121 / KW20 / Rd).